The chain runs to 270 residues: Homeobox protein pal-1 (270 aa).

Disordered stretches follow at residues 1-24 (MSVD…TTVP), 96-130 (VKPP…SGAA), and 175-201 (LGNN…TNNV). 2 stretches are compositionally biased toward low complexity: residues 14–24 (SSSTPSPTTVP) and 101–130 (SNGS…SGAA). Positions 206–265 (ADKYRMVYSDYQRLELEKEFHTSPFITSDRKSQLSTMLSLTERQIKIWFQNRRAKDRRDK) form a DNA-binding region, homeobox.

Belongs to the Caudal homeobox family. In terms of assembly, interacts with tir-1 and let-756. Blastomeres. Embryo. Oocytes.

The protein resides in the nucleus. It is found in the chromosome. Its subcellular location is the centromere. The protein localises to the kinetochore. In terms of biological role, transcriptional activator. Interacts with promoter regions for tbx-8.9, tbx-9, elt-1, hnd-1, scrt-1, and vab-7 genes. Binds the sequence ATTTATGAC. Binds to the enhancer region of the hlh-1 gene promoter during embryonic body wall muscle development. Activates the gene for mab-5 in embryo development. Necessary for vab-7 expression in C blastomeres in the posterior of embryos. Required for posterior V6 neuroectoblast cell fate specification during postembryonic neurogenesis (patterning) which generates the characteristic ray lineage during male tail development. Binds to ced-3 promoter and activated expression which is crucial for tail-spike cell death. Has a role in E cell specification in endoderm development and body wall muscle development. The polypeptide is Homeobox protein pal-1 (pal-1) (Caenorhabditis elegans).